The following is a 645-amino-acid chain: Sodium-dependent phosphate transporter 2 (645 aa).

The Extracellular segment spans residues Met-1–Glu-5. A helical membrane pass occupies residues Tyr-6–Ala-26. Residues Asn-27 to Gln-46 are Cytoplasmic-facing. A helical transmembrane segment spans residues Ala-47 to Gly-67. At Glu-68–Thr-86 the chain is on the extracellular side. An N-linked (GlcNAc...) asparagine glycan is attached at Asn-81. A helical transmembrane segment spans residues Leu-87–Phe-107. Over Leu-108–Arg-109 the chain is Cytoplasmic. The chain crosses the membrane as a helical span at residues Phe-110–Ile-130. Topologically, residues Gly-131 to Lys-142 are extracellular. Residues Ile-143 to Val-163 traverse the membrane as a helical segment. The Cytoplasmic portion of the chain corresponds to Leu-164 to Thr-190. Residues Ile-191 to Pro-211 traverse the membrane as a helical segment. Topologically, residues Met-212–Trp-213 are extracellular. The chain crosses the membrane as a helical span at residues Ala-214–Val-234. Over Cys-235–Glu-475 the chain is Cytoplasmic. Phosphoserine occurs at positions 253, 256, 259, 268, 316, and 379. The segment at Pro-275–Gly-320 is disordered. Residues Arg-448 to Lys-471 are disordered. The chain crosses the membrane as a helical span at residues Val-476–Gly-496. Over Gly-497 to Ala-523 the chain is Extracellular. Residues Ala-524–Trp-544 form a helical membrane-spanning segment. The Cytoplasmic portion of the chain corresponds to Gly-545 to Gly-564. The chain crosses the membrane as a helical span at residues Phe-565–Ser-579. The Extracellular portion of the chain corresponds to Asn-580 to Ser-586. The chain crosses the membrane as a helical span at residues Thr-587–Arg-602. Residues Ser-603–Asn-614 lie on the Cytoplasmic side of the membrane. The helical transmembrane segment at Ile-615–Ala-635 threads the bilayer. Over Leu-636 to Val-645 the chain is Extracellular.

Belongs to the inorganic phosphate transporter (PiT) (TC 2.A.20) family. Homodimer.

It is found in the cell membrane. The protein localises to the apical cell membrane. The enzyme catalyses 2 Na(+)(out) + phosphate(out) = 2 Na(+)(in) + phosphate(in). Functionally, sodium-phosphate symporter which preferentially transports the monovalent form of phosphate with a stoichiometry of two sodium ions per phosphate ion. Plays a critical role in the determination of bone quality and strength by providing phosphate for bone mineralization. Required to maintain normal cerebrospinal fluid phosphate levels. Mediates phosphate-induced calcification of vascular smooth muscle cells (VCMCs) and can functionally compensate for loss of SLC20A1 in VCMCs. This Bos taurus (Bovine) protein is Sodium-dependent phosphate transporter 2 (SLC20A2).